A 1037-amino-acid polypeptide reads, in one-letter code: Glycine dehydrogenase (decarboxylating) 1, mitochondrial (1037 aa).

Residues 1-67 (MERARRLAYR…AFGRHQQTRS (67 aa)) constitute a mitochondrion transit peptide. C98 bears the S-glutathionyl cysteine; transient mark. An S-glutathionyl cysteine mark is found at C402 and C463. K774 carries the post-translational modification N6-(pyridoxal phosphate)lysine. An S-glutathionyl cysteine; transient mark is found at C777, C943, and C1022.

The protein belongs to the GcvP family. Homodimer. The glycine cleavage system is composed of four proteins: P, T, L and H. Pyridoxal 5'-phosphate is required as a cofactor. Glutathionylated at Cys-98, Cys-777, Cys-943 and Cys-1022 after S-nitrosoglutathione treatment. In terms of processing, S-nitrosylated at unknown positions by nitric oxide. Expressed in leaves. Detected in roots, stems, flowers and siliques.

It is found in the mitochondrion. It catalyses the reaction N(6)-[(R)-lipoyl]-L-lysyl-[glycine-cleavage complex H protein] + glycine + H(+) = N(6)-[(R)-S(8)-aminomethyldihydrolipoyl]-L-lysyl-[glycine-cleavage complex H protein] + CO2. Its activity is regulated as follows. Inhibited by harpin, S-nitrosoglutathione (GSNO), nitric oxide, N-ethylmaleimide and 5,5'-dithiobis-(2-nitrobenzoic acid). Its function is as follows. The glycine decarboxylase (GDC) or glycine cleavage system catalyzes the degradation of glycine. The P protein binds the alpha-amino group of glycine through its pyridoxal phosphate cofactor; CO(2) is released and the remaining methylamine moiety is then transferred to the lipoamide cofactor of the H protein. The chain is Glycine dehydrogenase (decarboxylating) 1, mitochondrial (GLDP1) from Arabidopsis thaliana (Mouse-ear cress).